The chain runs to 134 residues: Large ribosomal subunit protein uL22 (134 aa).

Belongs to the universal ribosomal protein uL22 family. Part of the 50S ribosomal subunit.

Its function is as follows. This protein binds specifically to 23S rRNA; its binding is stimulated by other ribosomal proteins, e.g. L4, L17, and L20. It is important during the early stages of 50S assembly. It makes multiple contacts with different domains of the 23S rRNA in the assembled 50S subunit and ribosome. The globular domain of the protein is located near the polypeptide exit tunnel on the outside of the subunit, while an extended beta-hairpin is found that lines the wall of the exit tunnel in the center of the 70S ribosome. This chain is Large ribosomal subunit protein uL22, found in Gluconacetobacter diazotrophicus (strain ATCC 49037 / DSM 5601 / CCUG 37298 / CIP 103539 / LMG 7603 / PAl5).